The chain runs to 140 residues: uncharacterized protein (140 aa).

The tract at residues Thr-62 to Gly-140 is disordered. Positions Pro-71–Ser-94 are enriched in low complexity.

This is an uncharacterized protein from Homo sapiens (Human).